A 198-amino-acid chain; its full sequence is FMN-dependent NADH:quinone oxidoreductase (198 aa).

FMN contacts are provided by residues 92 to 95 (MWNL) and 136 to 139 (SRGG).

It belongs to the azoreductase type 1 family. Homodimer. FMN serves as cofactor.

It carries out the reaction 2 a quinone + NADH + H(+) = 2 a 1,4-benzosemiquinone + NAD(+). It catalyses the reaction N,N-dimethyl-1,4-phenylenediamine + anthranilate + 2 NAD(+) = 2-(4-dimethylaminophenyl)diazenylbenzoate + 2 NADH + 2 H(+). In terms of biological role, quinone reductase that provides resistance to thiol-specific stress caused by electrophilic quinones. Also exhibits azoreductase activity. Catalyzes the reductive cleavage of the azo bond in aromatic azo compounds to the corresponding amines. The chain is FMN-dependent NADH:quinone oxidoreductase from Clostridium perfringens (strain SM101 / Type A).